Consider the following 309-residue polypeptide: Aspartate carbamoyltransferase catalytic subunit (309 aa).

2 residues coordinate carbamoyl phosphate: Arg-49 and Thr-50. Lys-77 provides a ligand contact to L-aspartate. Arg-99, His-127, and Gln-130 together coordinate carbamoyl phosphate. Arg-160 and Arg-211 together coordinate L-aspartate. Carbamoyl phosphate-binding residues include Ala-252 and Pro-253.

It belongs to the aspartate/ornithine carbamoyltransferase superfamily. ATCase family. As to quaternary structure, heterododecamer (2C3:3R2) of six catalytic PyrB chains organized as two trimers (C3), and six regulatory PyrI chains organized as three dimers (R2).

The catalysed reaction is carbamoyl phosphate + L-aspartate = N-carbamoyl-L-aspartate + phosphate + H(+). The protein operates within pyrimidine metabolism; UMP biosynthesis via de novo pathway; (S)-dihydroorotate from bicarbonate: step 2/3. Its function is as follows. Catalyzes the condensation of carbamoyl phosphate and aspartate to form carbamoyl aspartate and inorganic phosphate, the committed step in the de novo pyrimidine nucleotide biosynthesis pathway. The polypeptide is Aspartate carbamoyltransferase catalytic subunit (Geobacillus sp. (strain WCH70)).